The chain runs to 164 residues: Dehydrin Rab16B (164 aa).

Residues 1 to 164 (MENYQGQHGY…KIKEKLPGQH (164 aa)) form a disordered region. Positions 25–53 (GQYGGGATAPGGGHGAMGMGGHAGAGAGG) are enriched in gly residues. Positions 107–117 (GNNQQQQQMMG) are enriched in low complexity. A compositionally biased stretch (basic and acidic residues) spans 147–164 (GEKKGFMDKIKEKLPGQH).

It belongs to the plant dehydrin family.

In Oryza sativa subsp. indica (Rice), this protein is Dehydrin Rab16B (RAB16B).